We begin with the raw amino-acid sequence, 353 residues long: Probable WRKY transcription factor 7 (353 aa).

The disordered stretch occupies residues 117–259; that stretch reads VEEKKPETSS…SSRCHCSKKR (143 aa). Over residues 158–176 the composition is skewed to low complexity; that stretch reads SHNNNNNQNQTKNGSSSSS. Polar residues-rich tracts occupy residues 184–204 and 213–229; these read APSTINFAPSPPVSATNSFMS and THMSSGFEFTNPSQLSG. Residues 275–341 constitute a DNA-binding region (WRKY); it reads KMADIPSDEF…YEGDHNHALV (67 aa).

Belongs to the WRKY group II-d family. In young, mature and senescent leaves.

It localises to the nucleus. In terms of biological role, transcription factor. Interacts specifically with the W box (5'-(T)TGAC[CT]-3'), a frequently occurring elicitor-responsive cis-acting element. The polypeptide is Probable WRKY transcription factor 7 (WRKY7) (Arabidopsis thaliana (Mouse-ear cress)).